We begin with the raw amino-acid sequence, 287 residues long: Hydroxysteroid 11-beta-dehydrogenase 1-like protein (287 aa).

Positions 1-15 (MKVLLLTGLGALFFA) are cleaved as a signal peptide. NADP(+) contacts are provided by residues 36-62 (GASA…TAHT), 87-88 (DM), and 114-116 (NHI). Residue Ser165 coordinates substrate. Catalysis depends on Tyr178, which acts as the Proton acceptor. Residues 178–182 (YSAAK) and 211–217 (GLRDRAS) contribute to the NADP(+) site.

This sequence belongs to the short-chain dehydrogenases/reductases (SDR) family.

The protein resides in the secreted. The catalysed reaction is cortisone + NADPH + H(+) = cortisol + NADP(+). Its function is as follows. Unidirectional NADP(+)-dependent cortisol dehydrogenase (in vitro). The protein is Hydroxysteroid 11-beta-dehydrogenase 1-like protein (HSD11B1L) of Macaca fascicularis (Crab-eating macaque).